An 88-amino-acid chain; its full sequence is Elongation factor 1-beta (88 aa).

It belongs to the EF-1-beta/EF-1-delta family.

Its function is as follows. Promotes the exchange of GDP for GTP in EF-1-alpha/GDP, thus allowing the regeneration of EF-1-alpha/GTP that could then be used to form the ternary complex EF-1-alpha/GTP/AAtRNA. The protein is Elongation factor 1-beta of Haloarcula marismortui (strain ATCC 43049 / DSM 3752 / JCM 8966 / VKM B-1809) (Halobacterium marismortui).